The primary structure comprises 483 residues: Glucose-1-phosphate adenylyltransferase large subunit 3, chloroplastic/amyloplastic (483 aa).

Belongs to the bacterial/plant glucose-1-phosphate adenylyltransferase family. In terms of assembly, heterotetramer. Tubers.

The protein localises to the plastid. Its subcellular location is the chloroplast. It localises to the amyloplast. The enzyme catalyses alpha-D-glucose 1-phosphate + ATP + H(+) = ADP-alpha-D-glucose + diphosphate. It functions in the pathway glycan biosynthesis; starch biosynthesis. With respect to regulation, activated by 3'phosphoglycerate, inhibited by orthophosphate. Allosteric regulation. Functionally, this protein plays a role in synthesis of starch. It catalyzes the synthesis of the activated glycosyl donor, ADP-glucose from Glc-1-P and ATP. The sequence is that of Glucose-1-phosphate adenylyltransferase large subunit 3, chloroplastic/amyloplastic (AGPS3) from Solanum tuberosum (Potato).